The chain runs to 286 residues: Protease HtpX homolog (286 aa).

The next 2 membrane-spanning stretches (helical) occupy residues 7 to 27 and 29 to 49; these read TFML…MIGG and SGMM…YWFS. H131 lines the Zn(2+) pocket. Residue E132 is part of the active site. H135 serves as a coordination point for Zn(2+). The next 2 helical transmembrane spans lie at 146 to 166 and 177 to 197; these read ISAT…FFGG and IAGI…QMAI. E202 contributes to the Zn(2+) binding site.

This sequence belongs to the peptidase M48B family. The cofactor is Zn(2+).

Its subcellular location is the cell inner membrane. The chain is Protease HtpX homolog from Ralstonia pickettii (strain 12J).